A 164-amino-acid polypeptide reads, in one-letter code: Protein-export protein SecB (164 aa).

The segment covering 1–12 (MPDKDEITHDAQ) has biased composition (basic and acidic residues). The disordered stretch occupies residues 1 to 22 (MPDKDEITHDAQSENEESLPLA).

The protein belongs to the SecB family. Homotetramer, a dimer of dimers. One homotetramer interacts with 1 SecA dimer.

The protein resides in the cytoplasm. One of the proteins required for the normal export of preproteins out of the cell cytoplasm. It is a molecular chaperone that binds to a subset of precursor proteins, maintaining them in a translocation-competent state. It also specifically binds to its receptor SecA. The chain is Protein-export protein SecB from Neorickettsia sennetsu (strain ATCC VR-367 / Miyayama) (Ehrlichia sennetsu).